Reading from the N-terminus, the 101-residue chain is NAD(P)H-quinone oxidoreductase subunit 4L, chloroplastic (101 aa).

Transmembrane regions (helical) follow at residues methionine 2–isoleucine 22, methionine 32–phenylalanine 52, and isoleucine 61–valine 81.

It belongs to the complex I subunit 4L family. NDH is composed of at least 16 different subunits, 5 of which are encoded in the nucleus.

The protein resides in the plastid. It is found in the chloroplast thylakoid membrane. The enzyme catalyses a plastoquinone + NADH + (n+1) H(+)(in) = a plastoquinol + NAD(+) + n H(+)(out). The catalysed reaction is a plastoquinone + NADPH + (n+1) H(+)(in) = a plastoquinol + NADP(+) + n H(+)(out). Functionally, NDH shuttles electrons from NAD(P)H:plastoquinone, via FMN and iron-sulfur (Fe-S) centers, to quinones in the photosynthetic chain and possibly in a chloroplast respiratory chain. The immediate electron acceptor for the enzyme in this species is believed to be plastoquinone. Couples the redox reaction to proton translocation, and thus conserves the redox energy in a proton gradient. The sequence is that of NAD(P)H-quinone oxidoreductase subunit 4L, chloroplastic from Ipomoea purpurea (Common morning glory).